A 171-amino-acid chain; its full sequence is UPF0312 protein MW2606 (171 aa).

This sequence belongs to the UPF0312 family.

The chain is UPF0312 protein MW2606 from Staphylococcus aureus (strain MW2).